We begin with the raw amino-acid sequence, 337 residues long: Na(+)/H(+) exchange regulatory cofactor NHE-RF2 (337 aa).

Residues 11-91 (LCRLVRGEQG…QTQLLVVDKE (81 aa)) form the PDZ 1 domain. The tract at residues 112-145 (LPPAHNPWEPKPDWACSGSLGSDTGQKDVNGPPR) is disordered. Phosphoserine occurs at positions 130, 183, 186, 254, 269, 280, and 303. In terms of domain architecture, PDZ 2 spans 151-231 (LCHLRRGPQG…EARLLVVDPE (81 aa)). The disordered stretch occupies residues 242 to 337 (VPTEEHVEGP…NRKREIFSNF (96 aa)). Over residues 255 to 275 (PVTNGTSPAQLNGGSVCSSRS) the composition is skewed to polar residues. The segment covering 327-337 (WNRKREIFSNF) has biased composition (basic and acidic residues).

Homodimer, and heterodimer with NHERF1. Binds PDZK1. Interacts with SRY. Binds ADRB2, SLC9A3, P2RY1, P2YR2, RDX and LPAR2. Interacts with MCC. Found in a complex with EZR, PODXL and NHERF2. Interacts (via the PDZ domains) with PODXL (via the C-terminal PDZ-binding motif DTHL); interaction is detected in glomerular epithelium cells. Interacts with SGK1 and KCNJ1/ROMK1. Interacts (via the PDZ domains) with SLC26A6.

Its subcellular location is the endomembrane system. The protein localises to the nucleus. The protein resides in the apical cell membrane. In terms of biological role, scaffold protein that connects plasma membrane proteins with members of the ezrin/moesin/radixin family and thereby helps to link them to the actin cytoskeleton and to regulate their surface expression. Necessary for cAMP-mediated phosphorylation and inhibition of SLC9A3. May also act as scaffold protein in the nucleus. This chain is Na(+)/H(+) exchange regulatory cofactor NHE-RF2 (Nherf2), found in Mus musculus (Mouse).